The sequence spans 675 residues: Electrogenic aspartate/glutamate antiporter SLC25A13, mitochondrial (675 aa).

Residue Ala2 is modified to N-acetylalanine. Residues 2-295 (AAAKVALTKR…TLADIERIAP (294 aa)) are regulatory N-terminal domain. The Mitochondrial intermembrane portion of the chain corresponds to 2–331 (AAAKVALTKR…LLQVAESAYR (330 aa)). EF-hand domains lie at 51 to 86 (SQPNPKTVELLSGVVDQTKDGLISFQEFVAFESVLC), 87 to 122 (APDALFMVAFQLFDKAGKGEVTFEDVKQVFGQTTIH), 125 to 157 (IPFNWDSEFVQLHFGKERKRHLTYAEFTQFLLE), and 158 to 193 (IQLEHAKQAFVQRDNARTGRVTAIDFRDIMVTIRPH). 5 residues coordinate Ca(2+): Asp66, Thr68, Asp70, Leu72, and Glu77. The linker loop domain stretch occupies residues 296 to 311 (LEEGTLPFNLAEAQRQ). The interval 321–612 (VLLQVAESAY…LQRWFYIDFG (292 aa)) is carrier domain. Solcar repeat units follow at residues 326–418 (AESA…VRDK), 426–510 (VPLA…VKAS), and 518–606 (VSPG…LQRW). The helical transmembrane segment at 332–349 (FGLGSVAGAVGATAVYPI) threads the bilayer. The Mitochondrial matrix portion of the chain corresponds to 350-392 (DLVKTRMQNQRSTGSFVGELMYKNSFDCFKKVLRYEGFFGLYR). 2 positions are modified to N6-acetyllysine: Lys353 and Lys372. The helical transmembrane segment at 393–412 (GLLPQLLGVAPEKAIKLTVN) threads the bilayer. Topologically, residues 413–435 (DFVRDKFMHKDGSVPLAAEILAG) are mitochondrial intermembrane. Residues 436–449 (GCAGGSQVIFTNPL) traverse the membrane as a helical segment. Over 450 to 484 (EIVKIRLQVAGEITTGPRVSALSVVRDLGFFGIYK) the chain is Mitochondrial matrix. N6-methyllysine is present on Lys453. Lys484 bears the N6-acetyllysine; alternate mark. Lys484 carries the N6-succinyllysine; alternate modification. A helical transmembrane segment spans residues 485 to 504 (GAKACFLRDIPFSAIYFPCY). Residues 505 to 523 (AHVKASFANEDGQVSPGSL) lie on the Mitochondrial intermembrane side of the membrane. Residues 524–541 (LLAGAIAGMPAASLVTPA) traverse the membrane as a helical segment. The Mitochondrial matrix segment spans residues 542-580 (DVIKTRLQVAARAGQTTYSGVIDCFRKILREEGPKALWK). Lys580 bears the N6-succinyllysine mark. Residues 581 to 600 (GAGARVFRSSPQFGVTLLTY) traverse the membrane as a helical segment. At 601 to 675 (ELLQRWFYID…STSKAIGGGP (75 aa)) the chain is on the mitochondrial intermembrane side. The segment at 613-675 (GVKPMGSEPV…STSKAIGGGP (63 aa)) is C-terminal domain. Lys662 is modified (N6-acetyllysine). Ser666 is modified (phosphoserine).

Belongs to the mitochondrial carrier (TC 2.A.29) family. In terms of assembly, homodimer (via N-terminus). High levels in liver and low levels in kidney, pancreas, placenta, heart and brain.

Its subcellular location is the mitochondrion inner membrane. It carries out the reaction L-aspartate(in) + L-glutamate(out) + H(+)(out) = L-aspartate(out) + L-glutamate(in) + H(+)(in). It catalyses the reaction 3-sulfino-L-alanine(out) + L-glutamate(in) + H(+)(in) = 3-sulfino-L-alanine(in) + L-glutamate(out) + H(+)(out). The enzyme catalyses 3-sulfino-L-alanine(out) + L-aspartate(in) = 3-sulfino-L-alanine(in) + L-aspartate(out). With respect to regulation, activated by calcium-binding in the mitochondrial intermembrane space. Inhibited by pyridoxal 5'-phosphate, bathophenathroline, mercurials, diethyl pyrocarbonate and N-ethylmaleimide. Mitochondrial electrogenic aspartate/glutamate antiporter that favors efflux of aspartate and entry of glutamate and proton within the mitochondria as part of the malate-aspartate shuttle. Also mediates the uptake of L-cysteinesulfinate (3-sulfino-L-alanine) by mitochondria in exchange of L-glutamate and proton. Can also exchange L-cysteinesulfinate with aspartate in their anionic form without any proton translocation. Lacks transport activity towards gamma-aminobutyric acid (GABA). The polypeptide is Electrogenic aspartate/glutamate antiporter SLC25A13, mitochondrial (Homo sapiens (Human)).